We begin with the raw amino-acid sequence, 228 residues long: UPF0502 protein Rfer_1648 (228 aa).

Belongs to the UPF0502 family.

This chain is UPF0502 protein Rfer_1648, found in Albidiferax ferrireducens (strain ATCC BAA-621 / DSM 15236 / T118) (Rhodoferax ferrireducens).